Here is a 666-residue protein sequence, read N- to C-terminus: 7SK snRNA methylphosphate capping enzyme (666 aa).

The residue at position 1 (methionine 1) is an N-acetylmethionine. Basic and acidic residues predominate over residues 1-10 (MIEMAAEKEP). A disordered region spans residues 1-141 (MIEMAAEKEP…GSGGSFKHPA (141 aa)). A compositionally biased stretch (low complexity) spans 50-61 (GPGPRAHSAGAA). Position 57 is a phosphoserine (serine 57). Arginine 91 carries the post-translational modification Omega-N-methylarginine. Serine 126, serine 150, and serine 154 each carry phosphoserine. A Phosphothreonine modification is found at threonine 188. Phosphoserine is present on residues serine 191, serine 192, and serine 229. Residues 235 to 244 (RKRHRHRGPH) are compositionally biased toward basic residues. The tract at residues 235–291 (RKRHRHRGPHHQQQQQASGGNDSNAAVLPTDPLTPSLHGEGATQQQQNRGQNRDAPQ) is disordered. Positions 245-254 (HQQQQQASGG) are enriched in low complexity. Threonine 268 bears the Phosphothreonine mark. A phosphoserine mark is found at serine 307 and serine 321. Over residues 309-337 (LPSALQGSSGSLSAPPAASVTSAPSTSSS) the composition is skewed to low complexity. Positions 309 to 383 (LPSALQGSSG…HHHPLPATGF (75 aa)) are disordered. Over residues 338–347 (SRHRKRRRTS) the composition is skewed to basic residues. Serine 368 is modified (phosphoserine). Residues tyrosine 399, arginine 410, 428–430 (GCN), 451–452 (DI), 536–537 (NY), and phenylalanine 558 each bind S-adenosyl-L-methionine. Positions 408–663 (DVRLRVLKPE…PVYLFHKARS (256 aa)) constitute a Bin3-type SAM domain. A Glycyl lysine isopeptide (Lys-Gly) (interchain with G-Cter in SUMO2) cross-link involves residue lysine 620.

It belongs to the methyltransferase superfamily. Core component of the 7SK RNP complex, at least composed of 7SK RNA, LARP7, MEPCE, HEXIM1 (or HEXIM2) and P-TEFb (composed of CDK9 and CCNT1/cyclin-T1). Interacts with METTL16. Interacts with RBM7; upon genotoxic stress this interaction is enhanced, triggering the release of inactive P-TEFb complex from the core, yielding to P-TEFb complex activation. Post-translationally, dephosphorylated at Ser-126 by the PNUTS-PP1 complex, promoting RNA polymerase II transcription pause-release.

The protein resides in the nucleus. It catalyses the reaction a 5'-end triphospho-guanosine-ribonucleotide-snRNA + S-adenosyl-L-methionine = a 5'-end methyltriphosphate-guanosine-ribonucleotide-snRNA + S-adenosyl-L-homocysteine. Its function is as follows. S-adenosyl-L-methionine-dependent methyltransferase that adds a methylphosphate cap at the 5'-end of 7SK snRNA (7SK RNA), leading to stabilize it. Also has a non-enzymatic function as part of the 7SK RNP complex: the 7SK RNP complex sequesters the positive transcription elongation factor b (P-TEFb) in a large inactive 7SK RNP complex preventing RNA polymerase II phosphorylation and subsequent transcriptional elongation. The 7SK RNP complex also promotes snRNA gene transcription by RNA polymerase II via interaction with the little elongation complex (LEC). In the 7SK RNP complex, MEPCE is required to stabilize 7SK RNA and facilitate the assembly of 7SK RNP complex. MEPCE has a non-enzymatic function in the 7SK RNP complex; it has a non-enzymatic function; interaction with LARP7 within the 7SK RNP complex occluding its catalytic center. Also required for stability of U6 snRNAs. The protein is 7SK snRNA methylphosphate capping enzyme of Mus musculus (Mouse).